The chain runs to 364 residues: Lysophosphatidic acid receptor 1 (364 aa).

The Extracellular segment spans residues 1 to 50 (MAAASTSSPVISQPQFTAMNEQQCFYNESIAFFYNRSGKYLATEWNTVSK). Intrachain disulfides connect Cys24/Cys190 and Cys188/Cys195. 2 N-linked (GlcNAc...) asparagine glycosylation sites follow: Asn27 and Asn35. Lys39 is an a 1-acyl-sn-glycero-3-phosphate binding site. A helical membrane pass occupies residues 51-75 (LVMGLGITVCVFIMLANLLVMVAIY). The Cytoplasmic portion of the chain corresponds to 76 to 83 (VNRRFHFP). A helical membrane pass occupies residues 84–107 (IYYLMANLAAADFFAGLAYFYLMF). Residues 108–121 (NTGPNTRRLTVSTW) lie on the Extracellular side of the membrane. Residues 122-144 (LLRQGLIDTSLTASVANLLAIAI) traverse the membrane as a helical segment. 124–129 (RQGLID) contacts a 1-acyl-sn-glycero-3-phosphate. Residues 145 to 163 (ERHITVFRMQLHTRMSNRR) are Cytoplasmic-facing. A helical transmembrane segment spans residues 164–184 (VVVVIVVIWTMAIVMGAIPSV). Over 185–204 (GWNCICDIDHCSNMAPLYSD) the chain is Extracellular. Residues 205–225 (SYLVFWAIFNLVTFVVMVVLY) form a helical membrane-spanning segment. An a 1-acyl-sn-glycero-3-phosphate-binding site is contributed by Trp210. Residues 226-255 (AHIFGYVRQRTMRMSRHSSGPRRNRDTMMS) lie on the Cytoplasmic side of the membrane. Residues 256-280 (LLKTVVIVLGAFIVCWTPGLVLLLL) traverse the membrane as a helical segment. The Extracellular portion of the chain corresponds to 281 to 294 (DVCCPQCDVLAYEK). Cys284 and Cys287 form a disulfide bridge. Residues 295–315 (FFLLLAEFNSAMNPIIYSYRD) form a helical membrane-spanning segment. The Cytoplasmic portion of the chain corresponds to 316 to 364 (KEMSATFRQILCCQRNENPNGPTEGSDRSASSLNHTILAGVHSNDHSVV). Ser341 carries the phosphoserine modification. Position 351 is a phosphothreonine (Thr351).

Belongs to the G-protein coupled receptor 1 family. In terms of assembly, interacts with RALA and GRK2. Interacts with GNAQ and GNA13. Interacts with CD14; the interaction is enhanced by exposure to bacterial lipopolysaccharide (LPS). In terms of processing, N-glycosylated. Detected in lung. Detected in oligodendrocytes in corpus callosum in brain cortex (at protein level). Expressed within the embryonic cerebral cortex, where it is enriched in the ventricular zone. In the adult brain, also expressed in oligodendrocytes, as well as Schwann cells of the peripheral nervous system. Expressed in many other tissues, including lung, heart, intestine, spleen, thymus, and stomach. No expression in liver. Detected in kidney and testis. Detected in embryonic fibroblasts. Detected in adult lung fibroblasts and lung endothelial cells. Detected in dorsal root ganglion and dorsal root. Detected in astrocytes. Detected in bone.

It is found in the cell surface. Its subcellular location is the cell membrane. The protein resides in the endosome. Its function is as follows. Receptor for lysophosphatidic acid (LPA). Plays a role in the reorganization of the actin cytoskeleton, cell migration, differentiation and proliferation, and thereby contributes to the responses to tissue damage and infectious agents. Activates downstream signaling cascades via the G(i)/G(o), G(12)/G(13), and G(q) families of heteromeric G proteins. Signaling inhibits adenylyl cyclase activity and decreases cellular cAMP levels. Signaling triggers an increase of cytoplasmic Ca(2+) levels. Activates RALA; this leads to the activation of phospholipase C (PLC) and the formation of inositol 1,4,5-trisphosphate. Signaling mediates activation of down-stream MAP kinases. Contributes to the regulation of cell shape. Promotes Rho-dependent reorganization of the actin cytoskeleton in neuronal cells and neurite retraction. Promotes the activation of Rho and the formation of actin stress fibers. Promotes formation of lamellipodia at the leading edge of migrating cells via activation of RAC1. Through its function as LPA receptor, plays a role in chemotaxis and cell migration, including responses to injury and wounding. Plays a role in triggering inflammation in response to bacterial lipopolysaccharide (LPS) via its interaction with CD14. Promotes cell proliferation in response to LPA. Inhibits the intracellular ciliogenesis pathway in response to LPA and through AKT1 activation. Required for normal skeleton development. May play a role in osteoblast differentiation. Required for normal brain development. Required for normal proliferation, survival and maturation of newly formed neurons in the adult dentate gyrus. Plays a role in pain perception and in the initiation of neuropathic pain. In Mus musculus (Mouse), this protein is Lysophosphatidic acid receptor 1 (Lpar1).